The following is a 434-amino-acid chain: Methylenetetrahydrofolate--tRNA-(uracil-5-)-methyltransferase TrmFO (434 aa).

10 to 15 (GAGLAG) provides a ligand contact to FAD.

It belongs to the MnmG family. TrmFO subfamily. FAD serves as cofactor.

The protein resides in the cytoplasm. The catalysed reaction is uridine(54) in tRNA + (6R)-5,10-methylene-5,6,7,8-tetrahydrofolate + NADH + H(+) = 5-methyluridine(54) in tRNA + (6S)-5,6,7,8-tetrahydrofolate + NAD(+). It catalyses the reaction uridine(54) in tRNA + (6R)-5,10-methylene-5,6,7,8-tetrahydrofolate + NADPH + H(+) = 5-methyluridine(54) in tRNA + (6S)-5,6,7,8-tetrahydrofolate + NADP(+). In terms of biological role, catalyzes the folate-dependent formation of 5-methyl-uridine at position 54 (M-5-U54) in all tRNAs. The sequence is that of Methylenetetrahydrofolate--tRNA-(uracil-5-)-methyltransferase TrmFO from Bacillus anthracis (strain A0248).